The chain runs to 172 residues: Spermidine/spermine N(1)-acetyltransferase (172 aa).

An N-acetyltransferase domain is found at 3–172; that stretch reads VKMKKCSRED…TDLIMAKTLI (170 aa). Acetyl-CoA contacts are provided by residues 96–98, 105–109, and 135–137; these read IYI, HGLGK, and NEN. Y142 functions as the Proton donor in the catalytic mechanism. Residue K144 participates in acetyl-CoA binding.

It belongs to the acetyltransferase family. As to quaternary structure, monomer.

The catalysed reaction is an alkane-alpha,omega-diamine + acetyl-CoA = an N-acetylalkane-alpha,omega-diamine + CoA + H(+). Its function is as follows. Involved in the protection against polyamine toxicity by regulating their concentration. Could also be involved in the negative control of sporulation as well as production of degradative enzymes such as alpha-amylase, levansucrase and alkaline phosphatase. Catalyzes the transfer of an acetyl group from acetyl coenzyme A (AcCoA) to an acceptor substrate and releases both CoA and the acetylated product. It possesses N1-acetyltransferase activity toward polyamine substrates including spermidine, spermine, aminopropylcadaverine, norspermidine, homospermidine, N(8)-acetylspermidine, diaminopropane and agmatine. This chain is Spermidine/spermine N(1)-acetyltransferase, found in Bacillus subtilis (strain 168).